The following is a 746-amino-acid chain: GTPase-activating protein GYP7 (746 aa).

2 positions are modified to phosphoserine: Ser265 and Ser339. Residues 385-633 (LENDSLRGKV…HIWENFWTFY (249 aa)) form the Rab-GAP TBC domain. Residues 470-505 (TIDGLPPPPQQLPANENNSTSPESANDESDDADDGV) form a disordered region. A compositionally biased stretch (polar residues) spans 481-491 (LPANENNSTSP).

It is found in the cytoplasm. GTPase-activating protein (GAP) that most effectively accelerates the intrinsic GTPase activity of Ypt/Rab-type GTPase YPT7 involved in vacuole docking and fusion. It is also active, but to a lesser extent, on YPT31, YPT32, YPT1, YPT6 and SEC4. Provides a catalytic arginine (arginine finger) in trans to accelerate the GTP hydrolysis rate of the substrate GTPase. This Saccharomyces cerevisiae (strain ATCC 204508 / S288c) (Baker's yeast) protein is GTPase-activating protein GYP7 (GYP7).